The sequence spans 556 residues: 2-succinyl-5-enolpyruvyl-6-hydroxy-3-cyclohexene-1-carboxylate synthase (556 aa).

Belongs to the TPP enzyme family. MenD subfamily. As to quaternary structure, homodimer. Requires Mg(2+) as cofactor. The cofactor is Mn(2+). Thiamine diphosphate is required as a cofactor.

It carries out the reaction isochorismate + 2-oxoglutarate + H(+) = 5-enolpyruvoyl-6-hydroxy-2-succinyl-cyclohex-3-ene-1-carboxylate + CO2. Its pathway is quinol/quinone metabolism; 1,4-dihydroxy-2-naphthoate biosynthesis; 1,4-dihydroxy-2-naphthoate from chorismate: step 2/7. It participates in quinol/quinone metabolism; menaquinone biosynthesis. In terms of biological role, catalyzes the thiamine diphosphate-dependent decarboxylation of 2-oxoglutarate and the subsequent addition of the resulting succinic semialdehyde-thiamine pyrophosphate anion to isochorismate to yield 2-succinyl-5-enolpyruvyl-6-hydroxy-3-cyclohexene-1-carboxylate (SEPHCHC). In Shigella sonnei (strain Ss046), this protein is 2-succinyl-5-enolpyruvyl-6-hydroxy-3-cyclohexene-1-carboxylate synthase.